The primary structure comprises 69 residues: DNA-directed RNA polymerase subunit epsilon (69 aa).

Belongs to the RNA polymerase subunit epsilon family. RNAP is composed of a core of 2 alpha, a beta and a beta' subunit. The core is associated with a delta subunit, and at least one of epsilon or omega. When a sigma factor is associated with the core the holoenzyme is formed, which can initiate transcription.

The enzyme catalyses RNA(n) + a ribonucleoside 5'-triphosphate = RNA(n+1) + diphosphate. Its function is as follows. A non-essential component of RNA polymerase (RNAP). In Listeria monocytogenes serotype 4b (strain CLIP80459), this protein is DNA-directed RNA polymerase subunit epsilon.